Here is a 203-residue protein sequence, read N- to C-terminus: Pyridoxine/pyridoxamine 5'-phosphate oxidase (203 aa).

Residues 50–55 (RMVLLK), 65–66 (YT), lysine 71, lysine 72, and glutamine 94 contribute to the FMN site. Lysine 55 is a substrate binding site. Substrate is bound by residues tyrosine 112, arginine 116, and serine 120. FMN contacts are provided by residues 129-130 (QS) and tryptophan 174. 180 to 182 (RLH) provides a ligand contact to substrate. Arginine 184 is an FMN binding site.

Belongs to the pyridoxamine 5'-phosphate oxidase family. In terms of assembly, homodimer. FMN is required as a cofactor.

It carries out the reaction pyridoxamine 5'-phosphate + O2 + H2O = pyridoxal 5'-phosphate + H2O2 + NH4(+). The catalysed reaction is pyridoxine 5'-phosphate + O2 = pyridoxal 5'-phosphate + H2O2. It participates in cofactor metabolism; pyridoxal 5'-phosphate salvage; pyridoxal 5'-phosphate from pyridoxamine 5'-phosphate: step 1/1. It functions in the pathway cofactor metabolism; pyridoxal 5'-phosphate salvage; pyridoxal 5'-phosphate from pyridoxine 5'-phosphate: step 1/1. In terms of biological role, catalyzes the oxidation of either pyridoxine 5'-phosphate (PNP) or pyridoxamine 5'-phosphate (PMP) into pyridoxal 5'-phosphate (PLP). The chain is Pyridoxine/pyridoxamine 5'-phosphate oxidase from Brucella canis (strain ATCC 23365 / NCTC 10854 / RM-666).